Here is a 241-residue protein sequence, read N- to C-terminus: Small ribosomal subunit protein uS3 (241 aa).

One can recognise a KH type-2 domain in the interval 39 to 108; that stretch reads IREGVLKLLK…NLKVEVKVIE (70 aa). The tract at residues 215–241 is disordered; it reads SQRVSEKAPMNNDRRFNNKNNNRGGRK. The span at 232-241 shows a compositional bias: low complexity; the sequence is NKNNNRGGRK.

Belongs to the universal ribosomal protein uS3 family. In terms of assembly, part of the 30S ribosomal subunit. Forms a tight complex with proteins S10 and S14.

Binds the lower part of the 30S subunit head. Binds mRNA in the 70S ribosome, positioning it for translation. This Mesoplasma florum (strain ATCC 33453 / NBRC 100688 / NCTC 11704 / L1) (Acholeplasma florum) protein is Small ribosomal subunit protein uS3.